The chain runs to 261 residues: MNFLWKGRRFLIAGILPTFEGAADEIVDKENKTYKAFLASKPPEETGLERLKQMFTIDEFGSISSELNSVYQAGFLGFLIGAIYGGVTQSRVAYMNFMENNQATAFKSHFDAKKKLQDQFTVNFAKGGFKWGWRVGLFTTSYFGIITCMSVYRGKSSIYEYLAAGSITGSLYKVSLGLRGMAAGGIIGGFLGGVAGVTSLLLMKASGTSMEEVRYWQYKWRLDRDENIQQAFKKLTEDENPELFKAHDEKTSEHVSLDTIK.

A run of 3 helical transmembrane segments spans residues 67–87, 131–151, and 183–203; these read LNSVYQAGFLGFLIGAIYGGV, WGWRVGLFTTSYFGIITCMSV, and AGGIIGGFLGGVAGVTSLLLM.

It belongs to the Tim17/Tim22/Tim23 family. As to quaternary structure, associates with complex I assembly intermediates during its biogenesis in a NdufAF3 and NdufAF4 dependent manner.

The protein resides in the membrane. Functionally, chaperone protein involved in the assembly of the mitochondrial NADH:ubiquinone oxidoreductase complex (complex I). Essential for viability. This is Complex I assembly factor TIMMDC1, mitochondrial from Drosophila melanogaster (Fruit fly).